Consider the following 251-residue polypeptide: Esterase mlcF (251 aa).

Active-site charge relay system residues include S126, D193, and H221.

It belongs to the LovG family.

It carries out the reaction dihydro-ML-236C-[compactin nonaketide synthase] + H2O = holo-[compactin nonaketide synthase] + dihydro-ML-236C carboxylate + H(+). It participates in polyketide biosynthesis. Esterase; part of the gene cluster that mediates the biosynthesis of compactin, also known as mevastatin or ML-236B, and which acts as a potent competitive inhibitor of HMG-CoA reductase. Compactin biosynthesis is performed in two stages. The first stage is catalyzed by the nonaketide synthase mlcA, which belongs to type I polyketide synthases and catalyzes the iterative nine-step formation of the polyketide. This PKS stage is completed by the action of dehydrogenase mlcG, which catalyzes the NADPH-dependent reduction of the unsaturated tetra-, penta- and heptaketide intermediates that arise during the mlcA-mediated biosynthesis of the nonaketide chain and leads to dihydro-ML-236C carboxylate. Covalently bound dihydro-ML-236C carboxylate is released from mlcA by the mlcF esterase. Conversion of dihydro-ML-236C carboxylate into ML-236A carboxylate is subsequently performed with the participation of molecular oxygen and P450 monoogygenase mlcC. Finally, mlcH performs the conversion of ML-236A carboxylate to ML-236B/compactin carboxylate through the addition of the side-chain diketide moiety produced by the diketide synthase mlcB. The sequence is that of Esterase mlcF from Penicillium citrinum.